The following is a 304-amino-acid chain: Oxygen-dependent coproporphyrinogen-III oxidase (304 aa).

Ser93 is a binding site for substrate. A divalent metal cation is bound by residues His97 and His107. The active-site Proton donor is the His107. 109–111 contacts substrate; that stretch reads NVR. His146 and His176 together coordinate a divalent metal cation. An important for dimerization region spans residues 241 to 276; it reads YVEFNLVYDRGTLFGLQSGGRTESILMSLPPQVRWG. 259 to 261 contributes to the substrate binding site; sequence GGR.

Belongs to the aerobic coproporphyrinogen-III oxidase family. As to quaternary structure, homodimer. The cofactor is a divalent metal cation.

Its subcellular location is the cytoplasm. The enzyme catalyses coproporphyrinogen III + O2 + 2 H(+) = protoporphyrinogen IX + 2 CO2 + 2 H2O. It functions in the pathway porphyrin-containing compound metabolism; protoporphyrin-IX biosynthesis; protoporphyrinogen-IX from coproporphyrinogen-III (O2 route): step 1/1. In terms of biological role, involved in the heme biosynthesis. Catalyzes the aerobic oxidative decarboxylation of propionate groups of rings A and B of coproporphyrinogen-III to yield the vinyl groups in protoporphyrinogen-IX. The chain is Oxygen-dependent coproporphyrinogen-III oxidase from Pseudomonas syringae pv. syringae (strain B728a).